The primary structure comprises 87 residues: Mitochondrial import inner membrane translocase subunit TIM8 (87 aa).

The short motif at 44–68 (CFKNCISNVQNADLSSQEEQCLNNC) is the Twin CX3C motif element. Intrachain disulfides connect C44–C68 and C48–C64.

It belongs to the small Tim family. As to quaternary structure, heterohexamer; composed of 3 copies of TIM8 and 3 copies of TIM13, named soluble 70 kDa complex. Associates with the TIM22 complex, whose core is composed of TIM22 and TIM54. Interacts with the transmembrane regions of multi-pass transmembrane proteins in transit.

Its subcellular location is the mitochondrion inner membrane. In terms of biological role, mitochondrial intermembrane chaperone that participates in the import and insertion of some multi-pass transmembrane proteins into the mitochondrial inner membrane. Also required for the transfer of beta-barrel precursors from the TOM complex to the sorting and assembly machinery (SAM complex) of the outer membrane. Acts as a chaperone-like protein that protects the hydrophobic precursors from aggregation and guide them through the mitochondrial intermembrane space. The TIM8-TIM13 complex is non essential and only mediates the import of few proteins, while the predominant TIM9-TIM10 70 kDa complex is crucial and mediates the import of much more proteins. This Kluyveromyces lactis (strain ATCC 8585 / CBS 2359 / DSM 70799 / NBRC 1267 / NRRL Y-1140 / WM37) (Yeast) protein is Mitochondrial import inner membrane translocase subunit TIM8 (TIM8).